Reading from the N-terminus, the 642-residue chain is Chaperone protein DnaK (642 aa).

Thr-196 carries the phosphothreonine; by autocatalysis modification. Polar residues predominate over residues 593–603 (STMYQTPSGDT). Residues 593 to 642 (STMYQTPSGDTPPSEPETGASEESKGGDKTQGDGEVDAEYEVIDGNDKDK) form a disordered region. Positions 614–624 (EESKGGDKTQG) are enriched in basic and acidic residues. Over residues 626–636 (GEVDAEYEVID) the composition is skewed to acidic residues.

This sequence belongs to the heat shock protein 70 family.

Its function is as follows. Acts as a chaperone. This chain is Chaperone protein DnaK, found in Chlorobium phaeobacteroides (strain BS1).